The following is a 290-amino-acid chain: Small ribosomal subunit biogenesis GTPase RsgA (290 aa).

Positions 62-213 constitute a CP-type G domain; the sequence is KNSLVRPPIV…IADTPGFSSL (152 aa). Residues 111–114 and 156–164 each bind GTP; these read SKLD and GQTGVGKST. The Zn(2+) site is built by cysteine 237, cysteine 242, histidine 244, and cysteine 250.

The protein belongs to the TRAFAC class YlqF/YawG GTPase family. RsgA subfamily. As to quaternary structure, monomer. Associates with 30S ribosomal subunit, binds 16S rRNA. Requires Zn(2+) as cofactor.

It localises to the cytoplasm. Functionally, one of several proteins that assist in the late maturation steps of the functional core of the 30S ribosomal subunit. Helps release RbfA from mature subunits. May play a role in the assembly of ribosomal proteins into the subunit. Circularly permuted GTPase that catalyzes slow GTP hydrolysis, GTPase activity is stimulated by the 30S ribosomal subunit. The sequence is that of Small ribosomal subunit biogenesis GTPase RsgA from Streptococcus agalactiae serotype V (strain ATCC BAA-611 / 2603 V/R).